Here is a 502-residue protein sequence, read N- to C-terminus: Protein MGF 505-5R (502 aa).

Belongs to the asfivirus MGF 505 family.

Plays a role in virus cell tropism, and may be required for efficient virus replication in macrophages. This African swine fever virus (isolate Tick/Malawi/Lil 20-1/1983) (ASFV) protein is Protein MGF 505-5R.